The sequence spans 253 residues: DNA repair protein RecO (253 aa).

This sequence belongs to the RecO family.

Involved in DNA repair and RecF pathway recombination. The chain is DNA repair protein RecO from Streptococcus agalactiae serotype Ia (strain ATCC 27591 / A909 / CDC SS700).